A 753-amino-acid chain; its full sequence is MWKLVPAAGPGEPFRLLVGTEYVVGRKNCAFLIQDDQSISRSHAVLTVSRPETTHSQSVSVPVLTIKDTSKYGTFVNGSKLSGASRSLQSGDRVNFGVFESKFRVEYESLVVCSSCLDVAQKTALNEAIQQLGGLVVNEWTKECTHLIMESVKVTVKTICALICGRPIVKPEFFSELMKAVQSRQQLPTPESFYPSVDEPAIGIDNMDLSGHPERKKIFSGKTFVFLTAKQHKKLGPAVILGGGEAKLMAEERKETSLLVSPEVCVVDVGVTNSQILGSESMRNWTDSILAVLESNNLRAIPEAEIGLAVIFMSTEIYCNPQRQPDNKAVTASTASKVRPVSSQSSTVDETIMPTAAADYSTLNVADTEIEEQTCMEIERTTSQTTRREKVAFQQAAVRENPSTSGTVNAGMLISRVNRTSGFGQKNHPHSPSKILEVDKPRECTPRQQSNSITNYFHVARKRERAEEGEETSLSKQAKLEKKPLPVSECTESSASSAWNSEKEQHGKGNNIQLGRESGELASDKTDIKITFSENPAPKKRKELDDVSEDVETLEMVFESRDLDWEEQTANGDQEAQSNKRKKRCLETKGSRTEEGNTKQREENEMLRKEEVGSVLTLEDKSKIKEESSVSIRNKLINHNKLEDDSSRLPSKLLLTEFRSLVVSCPRSNSPTMRNTKCRGQNNFKTFRKVPYPGAGQLPYIIGGSDLVAHQARKNSELEEWLREELEEQNRRAREESLADDLFRYDPNVKRRR.

An FHA domain is found at 22-81 (YVVGRKNCAFLIQDDQSISRSHAVLTVSRPETTHSQSVSVPVLTIKDTSKYGTFVNGSKL). BRCT domains are found at residues 101 to 191 (SKFR…PTPE) and 221 to 311 (GKTF…LAVI). Serine 274 bears the Phosphoserine mark. A Phosphoserine; by ATM modification is found at serine 343. The tract at residues 442–606 (RECTPRQQSN…NTKQREENEM (165 aa)) is disordered. The span at 446 to 455 (PRQQSNSITN) shows a compositional bias: polar residues. The Nuclear localization signal signature appears at 461–467 (RKRERAE). A compositionally biased stretch (polar residues) spans 490-500 (CTESSASSAWN). Residues 517 to 528 (ESGELASDKTDI) are compositionally biased toward basic and acidic residues. Residues 568-577 (QTANGDQEAQ) show a composition bias toward polar residues. Positions 585–606 (CLETKGSRTEEGNTKQREENEM) are enriched in basic and acidic residues. The FxF/Y motif signature appears at 739–748 (ADDLFRYDPN).

It belongs to the Nibrin family. As to quaternary structure, component of the MRN complex composed of two heterodimers RAD50 and mre11 associated with a single NBN.

It localises to the nucleus. Its subcellular location is the chromosome. The protein localises to the PML body. The protein resides in the telomere. In terms of biological role, component of the MRN complex, which plays a central role in double-strand break (DSB) repair, DNA recombination, maintenance of telomere integrity and meiosis. The MRN complex is involved in the repair of DNA double-strand breaks (DSBs) via homologous recombination (HR), an error-free mechanism which primarily occurs during S and G2 phases. The complex (1) mediates the end resection of damaged DNA, which generates proper single-stranded DNA, a key initial steps in HR, and is (2) required for the recruitment of other repair factors and efficient activation of ATM and ATR upon DNA damage. The MRN complex possesses single-strand endonuclease activity and double-strand-specific 3'-5' exonuclease activity, which are provided by MRE11, to initiate end resection, which is required for single-strand invasion and recombination. Within the MRN complex, NBN acts as a protein-protein adapter, which specifically recognizes and binds phosphorylated proteins, promoting their recruitment to DNA damage sites. Recruits MRE11 and RAD50 components of the MRN complex to DSBs in response to DNA damage. Promotes the recruitment of PI3/PI4-kinase family members ATM, ATR, and probably DNA-PKcs to the DNA damage sites, activating their functions. Mediates the recruitment of phosphorylated RBBP8/CtIP to DSBs, leading to cooperation between the MRN complex and RBBP8/CtIP to initiate end resection. The MRN complex and rbbp8/CtIP are also required for chromosome alignment during metaphase. In Gallus gallus (Chicken), this protein is Nibrin (NBN).